We begin with the raw amino-acid sequence, 712 residues long: Polyphosphate kinase (712 aa).

An ATP-binding site is contributed by Asn49. Mg(2+) is bound by residues Arg398 and Arg428. The active-site Phosphohistidine intermediate is His458. Tyr491, Arg587, and His615 together coordinate ATP.

Belongs to the polyphosphate kinase 1 (PPK1) family. Requires Mg(2+) as cofactor. An intermediate of this reaction is the autophosphorylated ppk in which a phosphate is covalently linked to a histidine residue through a N-P bond.

The enzyme catalyses [phosphate](n) + ATP = [phosphate](n+1) + ADP. In terms of biological role, catalyzes the reversible transfer of the terminal phosphate of ATP to form a long-chain polyphosphate (polyP). The sequence is that of Polyphosphate kinase from Parasynechococcus marenigrum (strain WH8102).